The sequence spans 438 residues: Histidine--tRNA ligase (438 aa).

Belongs to the class-II aminoacyl-tRNA synthetase family. As to quaternary structure, homodimer.

The protein localises to the cytoplasm. The catalysed reaction is tRNA(His) + L-histidine + ATP = L-histidyl-tRNA(His) + AMP + diphosphate + H(+). The polypeptide is Histidine--tRNA ligase (Blochmanniella pennsylvanica (strain BPEN)).